The sequence spans 75 residues: RNA-binding protein KhpA (75 aa).

Residues 29-75 (SIIIELKVAPEDMGKVIGKQGRIAQAIRTLVKAAALKEKKRVIVEII) enclose the KH domain.

It belongs to the KhpA RNA-binding protein family. As to quaternary structure, forms a complex with KhpB.

Its subcellular location is the cytoplasm. Functionally, a probable RNA chaperone. Forms a complex with KhpB which binds to cellular RNA and controls its expression. Plays a role in peptidoglycan (PG) homeostasis and cell length regulation. The protein is RNA-binding protein KhpA of Caldanaerobacter subterraneus subsp. tengcongensis (strain DSM 15242 / JCM 11007 / NBRC 100824 / MB4) (Thermoanaerobacter tengcongensis).